A 378-amino-acid chain; its full sequence is UPF0754 membrane protein Exig_0680 (378 aa).

The next 2 helical transmembrane spans lie at 5–25 and 357–377; these read VDLV…GAVT and ITWL…ILLI.

The protein belongs to the UPF0754 family.

Its subcellular location is the cell membrane. This Exiguobacterium sibiricum (strain DSM 17290 / CCUG 55495 / CIP 109462 / JCM 13490 / 255-15) protein is UPF0754 membrane protein Exig_0680.